A 205-amino-acid polypeptide reads, in one-letter code: GTP cyclohydrolase-2 (205 aa).

49-53 contributes to the GTP binding site; sequence RIHSE. Cys54, Cys65, and Cys67 together coordinate Zn(2+). GTP is bound by residues Gln70, 92–94, and Thr114; that span reads EGR. Asp126 (proton acceptor) is an active-site residue. The active-site Nucleophile is Arg128. Thr149 and Lys154 together coordinate GTP.

This sequence belongs to the GTP cyclohydrolase II family. Zn(2+) is required as a cofactor.

It catalyses the reaction GTP + 4 H2O = 2,5-diamino-6-hydroxy-4-(5-phosphoribosylamino)-pyrimidine + formate + 2 phosphate + 3 H(+). It participates in cofactor biosynthesis; riboflavin biosynthesis; 5-amino-6-(D-ribitylamino)uracil from GTP: step 1/4. Catalyzes the conversion of GTP to 2,5-diamino-6-ribosylamino-4(3H)-pyrimidinone 5'-phosphate (DARP), formate and pyrophosphate. The sequence is that of GTP cyclohydrolase-2 from Shewanella woodyi (strain ATCC 51908 / MS32).